A 406-amino-acid chain; its full sequence is NAC transcription factor NAM-B1 (406 aa).

The span at 1–11 shows a compositional bias: polar residues; the sequence is MGSPDSSSGSA. Residues 1–40 are disordered; it reads MGSPDSSSGSAQKPPRHQHQHQPPPPRRQGSAPELPPGFR. The region spanning 35–204 is the NAC domain; that stretch reads LPPGFRFHPT…DWVLCRIYKK (170 aa). The DNA-binding element occupies 137-210; it reads VGVKKALVFY…IYKKTSKAAA (74 aa).

Its subcellular location is the nucleus. Functionally, transcription factor of the NAC family associated with the grain protein content (GPC). Sequences of the 11 European varieties of H.vulgare tested belongs to the same haplotype while the sequence found in H.spontaneum, an ancestor of the cultivated H.vulgare which has a higher GPC, belongs to an other haplotype. This Hordeum vulgare subsp. spontaneum (Wild barley) protein is NAC transcription factor NAM-B1 (NAM-B1).